The primary structure comprises 455 residues: Immunoglobulin alpha-2 heavy chain (455 aa).

4 Ig-like domains span residues 1-95 (EVQL…VYYC), 121-213 (PKVF…QDVT), 227-322 (PRLS…ANIT), and 330-432 (PEVH…KTID). Positions 1–115 (EVQLVETGGG…GKGTTVTVSS (115 aa)) are variable (V) domain, involved in antigen recognition. Intrachain disulfides connect cysteine 22-cysteine 95 and cysteine 141-cysteine 200. The tract at residues 116 to 455 (ASPTSPKVFP…VMAEADGTCY (340 aa)) is constant (C) domain. Asparagine 162, asparagine 207, and asparagine 246 each carry an N-linked (GlcNAc...) asparagine glycan. 2 disulfide bridges follow: cysteine 225–cysteine 282 and cysteine 249–cysteine 306. N-linked (GlcNAc...) asparagine glycosylation is present at asparagine 320. Cysteines 352 and 415 form a disulfide. Asparagine 442 carries an N-linked (GlcNAc...) asparagine glycan.

As to quaternary structure, immunoglobulins are composed of two identical heavy chains and two identical light chains; disulfide-linked. Monomeric or polymeric.

Its subcellular location is the secreted. It is found in the cell membrane. Its function is as follows. Immunoglobulins, also known as antibodies, are membrane-bound or secreted glycoproteins produced by B lymphocytes. In the recognition phase of humoral immunity, the membrane-bound immunoglobulins serve as receptors which, upon binding of a specific antigen, trigger the clonal expansion and differentiation of B lymphocytes into immunoglobulins-secreting plasma cells. Secreted immunoglobulins mediate the effector phase of humoral immunity, which results in the elimination of bound antigens. The antigen binding site is formed by the variable domain of one heavy chain, together with that of its associated light chain. Thus, each immunoglobulin has two antigen binding sites with remarkable affinity for a particular antigen. The variable domains are assembled by a process called V-(D)-J rearrangement and can then be subjected to somatic hypermutations which, after exposure to antigen and selection, allow affinity maturation for a particular antigen. Ig alpha is the major immunoglobulin class in body secretions. The polypeptide is Immunoglobulin alpha-2 heavy chain (Homo sapiens (Human)).